Consider the following 83-residue polypeptide: Disintegrin bitistatin (83 aa).

A Disintegrin domain is found at 2–83; sequence PPVCGNKILE…GKSSDCPWNH (82 aa). 10 disulfides stabilise this stretch: cysteine 5–cysteine 24, cysteine 5–cysteine 34, cysteine 16–cysteine 29, cysteine 16–cysteine 34, cysteine 18–cysteine 24, cysteine 18–cysteine 29, cysteine 28–cysteine 51, cysteine 42–cysteine 48, cysteine 47–cysteine 72, and cysteine 60–cysteine 79. The Cell attachment site signature appears at 64–66; it reads RGD.

Belongs to the venom metalloproteinase (M12B) family. P-II subfamily. P-IIa sub-subfamily. As to quaternary structure, monomer. Post-translationally, exists in 3 forms in the venom. The forms A, B, and C are present at 53%, 32% and 15%. The forms A and B differ by their disulfide bond pattern in the N-terminal part. No information is known about form C. Expressed by the venom gland.

It is found in the secreted. Inhibits fibrinogen interaction with platelets. Acts by binding to alpha-IIb/beta-3 (ITGA2B/ITGB3) on the platelet surface and inhibits aggregation induced by ADP, thrombin, platelet-activating factor and collagen. The sequence is that of Disintegrin bitistatin from Bitis arietans (African puff adder).